The primary structure comprises 255 residues: Hydroxyacylglutathione hydrolase (255 aa).

His-56, His-58, Asp-60, His-61, His-114, Asp-133, and His-171 together coordinate Zn(2+).

The protein belongs to the metallo-beta-lactamase superfamily. Glyoxalase II family. In terms of assembly, monomer. Zn(2+) serves as cofactor.

It carries out the reaction an S-(2-hydroxyacyl)glutathione + H2O = a 2-hydroxy carboxylate + glutathione + H(+). It functions in the pathway secondary metabolite metabolism; methylglyoxal degradation; (R)-lactate from methylglyoxal: step 2/2. In terms of biological role, thiolesterase that catalyzes the hydrolysis of S-D-lactoyl-glutathione to form glutathione and D-lactic acid. The polypeptide is Hydroxyacylglutathione hydrolase (Rhodopseudomonas palustris (strain HaA2)).